Here is a 255-residue protein sequence, read N- to C-terminus: Ribosomal RNA small subunit methyltransferase A (255 aa).

Positions 12, 14, 39, 60, 81, and 103 each coordinate S-adenosyl-L-methionine.

Belongs to the class I-like SAM-binding methyltransferase superfamily. rRNA adenine N(6)-methyltransferase family. RsmA subfamily.

It localises to the cytoplasm. It catalyses the reaction adenosine(1518)/adenosine(1519) in 16S rRNA + 4 S-adenosyl-L-methionine = N(6)-dimethyladenosine(1518)/N(6)-dimethyladenosine(1519) in 16S rRNA + 4 S-adenosyl-L-homocysteine + 4 H(+). Functionally, specifically dimethylates two adjacent adenosines (A1518 and A1519) in the loop of a conserved hairpin near the 3'-end of 16S rRNA in the 30S particle. May play a critical role in biogenesis of 30S subunits. The chain is Ribosomal RNA small subunit methyltransferase A from Variovorax paradoxus (strain S110).